Here is a 347-residue protein sequence, read N- to C-terminus: Probable dual-specificity RNA methyltransferase RlmN (347 aa).

Residue Glu90 is the Proton acceptor of the active site. The Radical SAM core domain occupies 96–326 (YKHGNSICIS…VTVRREMGSD (231 aa)). Residues Cys103 and Cys331 are joined by a disulfide bond. [4Fe-4S] cluster-binding residues include Cys110, Cys114, and Cys117. S-adenosyl-L-methionine contacts are provided by residues 157–158 (GE), Ser189, 212–214 (SLH), and Asn288. Cys331 serves as the catalytic S-methylcysteine intermediate.

The protein belongs to the radical SAM superfamily. RlmN family. Requires [4Fe-4S] cluster as cofactor.

The protein localises to the cytoplasm. The catalysed reaction is adenosine(2503) in 23S rRNA + 2 reduced [2Fe-2S]-[ferredoxin] + 2 S-adenosyl-L-methionine = 2-methyladenosine(2503) in 23S rRNA + 5'-deoxyadenosine + L-methionine + 2 oxidized [2Fe-2S]-[ferredoxin] + S-adenosyl-L-homocysteine. It catalyses the reaction adenosine(37) in tRNA + 2 reduced [2Fe-2S]-[ferredoxin] + 2 S-adenosyl-L-methionine = 2-methyladenosine(37) in tRNA + 5'-deoxyadenosine + L-methionine + 2 oxidized [2Fe-2S]-[ferredoxin] + S-adenosyl-L-homocysteine. Functionally, specifically methylates position 2 of adenine 2503 in 23S rRNA and position 2 of adenine 37 in tRNAs. The polypeptide is Probable dual-specificity RNA methyltransferase RlmN (Clostridium botulinum (strain Eklund 17B / Type B)).